A 225-amino-acid chain; its full sequence is NAD(P)H-quinone oxidoreductase subunit K, chloroplastic (225 aa).

Residues Cys43, Cys44, Cys108, and Cys139 each contribute to the [4Fe-4S] cluster site.

It belongs to the complex I 20 kDa subunit family. In terms of assembly, NDH is composed of at least 16 different subunits, 5 of which are encoded in the nucleus. Requires [4Fe-4S] cluster as cofactor.

It is found in the plastid. The protein localises to the chloroplast thylakoid membrane. It catalyses the reaction a plastoquinone + NADH + (n+1) H(+)(in) = a plastoquinol + NAD(+) + n H(+)(out). The enzyme catalyses a plastoquinone + NADPH + (n+1) H(+)(in) = a plastoquinol + NADP(+) + n H(+)(out). Its function is as follows. NDH shuttles electrons from NAD(P)H:plastoquinone, via FMN and iron-sulfur (Fe-S) centers, to quinones in the photosynthetic chain and possibly in a chloroplast respiratory chain. The immediate electron acceptor for the enzyme in this species is believed to be plastoquinone. Couples the redox reaction to proton translocation, and thus conserves the redox energy in a proton gradient. The polypeptide is NAD(P)H-quinone oxidoreductase subunit K, chloroplastic (Triticum aestivum (Wheat)).